The primary structure comprises 120 residues: Spermidine export protein MdtJ (120 aa).

4 consecutive transmembrane segments (helical) span residues 1–21, 31–51, 54–74, and 81–101; these read MFYW…TLSM, AGFI…SFAV, IALG…ITIF, and EALS…IVLI.

The protein belongs to the drug/metabolite transporter (DMT) superfamily. Small multidrug resistance (SMR) (TC 2.A.7.1) family. MdtJ subfamily. As to quaternary structure, forms a complex with MdtI.

It localises to the cell inner membrane. Catalyzes the excretion of spermidine. This chain is Spermidine export protein MdtJ, found in Salmonella agona (strain SL483).